Reading from the N-terminus, the 770-residue chain is Pyrophosphate-energized vacuolar membrane proton pump 1 (770 aa).

Residues 1–9 lie on the Intravacuolar side of the membrane; sequence MVAPALLPE. Residues 10-36 traverse the membrane as a helical segment; it reads LWTEILVPICAVIGIAFSLFQWYVVSR. The Cytoplasmic segment spans residues 37–88; sequence VKLTSDLGASSSGGANNGKNGYGDYLIEEEEGVNDQSVVAKCAEIQTAISEG. The helical transmembrane segment at 89 to 118 threads the bilayer; the sequence is ATSFLFTEYKYVGVFMIFFAAVIFVFLGSV. Topologically, residues 119-139 are intravacuolar; it reads EGFSTDNKPCTYDTTRTCKPA. Cys128 and Cys136 form a disulfide bridge. Residues 140 to 167 form a helical membrane-spanning segment; that stretch reads LATAAFSTIAFVLGAVTSVLSGFLGMKI. At 168 to 190 the chain is on the cytoplasmic side; it reads ATYANARTTLEARKGVGKAFIVA. A helical membrane pass occupies residues 191–220; sequence FRSGAVMGFLLAASGLLVLYITINVFKIYY. The Intravacuolar segment spans residues 221 to 223; sequence GDD. The helical transmembrane segment at 224-252 threads the bilayer; sequence WEGLFEAITGYGLGGSSMALFGRVGGGIY. The Cytoplasmic segment spans residues 253–290; sequence TKAADVGADLVGKIERNIPEDDPRNPAVIADNVGDNVG. Lys254 is a binding site for substrate. Residues Asp257, Asp261, and Asp287 each coordinate Mg(2+). A helical transmembrane segment spans residues 291–316; that stretch reads DIAGMGSDLFGSYAEASCAALVVASI. Residues 317–324 are Intravacuolar-facing; sequence SSFGINHD. A helical membrane pass occupies residues 325-350; the sequence is FTAMCYPLLISSMGILVCLITTLFAT. The Cytoplasmic segment spans residues 351 to 358; sequence DFFEIKLV. Residues 359-386 traverse the membrane as a helical segment; that stretch reads KEIEPALKNQLIISTVIMTVGIAIVSWV. Residues 387–405 are Intravacuolar-facing; that stretch reads GLPTSFTIFNFGTQKVVKN. A helical transmembrane segment spans residues 406-429; that stretch reads WQLFLCVCVGLWAGLIIGFVTEYY. At 430 to 451 the chain is on the cytoplasmic side; sequence TSNAYSPVQDVADSCRTGAATN. A helical membrane pass occupies residues 452–476; that stretch reads VIFGLALGYKSVIIPIFAIAISIFV. The Intravacuolar portion of the chain corresponds to 477-482; sequence SFSFAA. A helical membrane pass occupies residues 483 to 509; that stretch reads MYGVAVAALGMLSTIATGLAIDAYGPI. Residues 510-538 lie on the Cytoplasmic side of the membrane; the sequence is SDNAGGIAEMAGMSHRIRERTDALDAAGN. Mg(2+) is bound by residues Asp511 and Asn538. The chain crosses the membrane as a helical span at residues 539–567; the sequence is TTAAIGKGFAIGSAALVSLALFGAFVSRA. Residues 568–577 lie on the Intravacuolar side of the membrane; that stretch reads GIHTVDVLTP. Residues 578–606 traverse the membrane as a helical segment; sequence KVIIGLLVGAMLPYWFSAMTMKSVGSAAL. Topologically, residues 607–635 are cytoplasmic; it reads KMVEEVRRQFNTIPGLMEGTAKPDYATCV. Residues 636–664 form a helical membrane-spanning segment; that stretch reads KISTDASIKEMIPPGCLVMLTPLIVGFFF. A topological domain (intravacuolar) is located at residue Gly665. Residues 666-693 form a helical membrane-spanning segment; sequence VETLSGVLAGSLVSGVQIAISASNTGGA. Topologically, residues 694-736 are cytoplasmic; sequence WDNAKKYIEAGVSEHAKSLGPKGSEPHKAAVIGDTIGDPLKDT. Residues Asp695 and Asp731 each coordinate Mg(2+). Residue Lys734 coordinates substrate. The chain crosses the membrane as a helical span at residues 737–762; that stretch reads SGPSLNILIKLMAVESLVFAPFFATH. Topologically, residues 763-770 are intravacuolar; sequence GGILFKYF.

This sequence belongs to the H(+)-translocating pyrophosphatase (TC 3.A.10) family. K(+)-stimulated subfamily. As to quaternary structure, monomer. Ubiquitous (at protein level). Mostly expressed in vascular tissues, meristems and root pericycle.

The protein resides in the vacuole membrane. It is found in the endosome membrane. Its subcellular location is the cell membrane. It catalyses the reaction diphosphate + H2O + H(+)(in) = 2 phosphate + 2 H(+)(out). With respect to regulation, activated by K(+) and Mg(2+). Inhibited by Ca(2+), N,N'-dicyclohexylcarbodiimide (DCCD), N-ethylmaleimide (NEM) and aminomethylenediphosphonate (AMDP), and, to a lower extent, by fluoride (KF). In terms of biological role, contributes to the transtonoplast (from cytosol to vacuole lumen) H(+)-electrochemical potential difference. It establishes a proton gradient of similar and often greater magnitude than the H(+)-ATPase on the same membrane. In addition, facilitates auxin transport by modulating apoplastic pH and regulates auxin-mediated developmental processes. Confers tolerance to NaCl and to drought by increasing ion retention. The protein is Pyrophosphate-energized vacuolar membrane proton pump 1 (AVP1) of Arabidopsis thaliana (Mouse-ear cress).